The primary structure comprises 144 residues: Probable nucleoside diphosphate kinase 5 (144 aa).

6 residues coordinate ATP: lysine 3, phenylalanine 51, arginine 79, threonine 85, arginine 99, and asparagine 109. The active-site Pros-phosphohistidine intermediate is histidine 112.

Belongs to the NDK family.

It catalyses the reaction a 2'-deoxyribonucleoside 5'-diphosphate + ATP = a 2'-deoxyribonucleoside 5'-triphosphate + ADP. It carries out the reaction a ribonucleoside 5'-diphosphate + ATP = a ribonucleoside 5'-triphosphate + ADP. Functionally, involved in the synthesis of nucleoside triphosphates other than ATP. The ATP gamma phosphate is transferred to the NDP beta phosphate via a ping-pong mechanism, using a phosphorylated active-site intermediate. This Arabidopsis thaliana (Mouse-ear cress) protein is Probable nucleoside diphosphate kinase 5.